The primary structure comprises 182 residues: Ribosome-recycling factor (182 aa).

The protein belongs to the RRF family.

Its subcellular location is the cytoplasm. Its function is as follows. Responsible for the release of ribosomes from messenger RNA at the termination of protein biosynthesis. May increase the efficiency of translation by recycling ribosomes from one round of translation to another. The sequence is that of Ribosome-recycling factor from Hydrogenobaculum sp. (strain Y04AAS1).